The following is a 592-amino-acid chain: Probable 6-phosphofructo-2-kinase C222.13c (592 aa).

Residues 1 to 80 (MSNTGSARTE…PANDVEKMEV (80 aa)) form a disordered region. A compositionally biased stretch (basic and acidic residues) spans 57 to 66 (SIFKREELTP). 150–157 (GIPATGKS) provides a ligand contact to ATP. Active-site residues include Asp-235 and Cys-266. Arg-300 serves as a coordination point for beta-D-fructose 6-phosphate. His-527 (proton donor) is an active-site residue.

The protein localises to the cytoplasm. The protein resides in the nucleus. It catalyses the reaction beta-D-fructose 6-phosphate + ATP = beta-D-fructose 2,6-bisphosphate + ADP + H(+). Synthesis of fructose 2,6-bisphosphate. This is Probable 6-phosphofructo-2-kinase C222.13c from Schizosaccharomyces pombe (strain 972 / ATCC 24843) (Fission yeast).